Consider the following 509-residue polypeptide: Transmembrane protein 180 (509 aa).

Residues 1-10 (MGLRLLACLF) lie on the Extracellular side of the membrane. Residues 11–42 (HLPTAVIYGSLSLFVSILHNVFLLYYVDTFVS) form a helical membrane-spanning segment. The Cytoplasmic segment spans residues 43–54 (VYKIDKLSFWIG). Residues 55–73 (ETVFLIWNSLNDPLFGWLS) form a helical membrane-spanning segment. Residues 74–98 (DRVFLSTQQPGAEISSPEVVLKRLR) are Extracellular-facing. The helical transmembrane segment at 99–116 (ALSHNGPLFAISFLAFWV) threads the bilayer. Topologically, residues 117 to 124 (AWAHPGLQ) are cytoplasmic. The helical transmembrane segment at 125 to 149 (FLLCLCMYDSFLTMVDLHHNALLAD) threads the bilayer. At 150–153 (LAVS) the chain is on the extracellular side. The helical transmembrane segment at 154–177 (AKDRTSLNFYCSFFSAIGSLSVFM) threads the bilayer. Residues 178–189 (SYAVWNKEDFFS) are Cytoplasmic-facing. A helical transmembrane segment spans residues 190 to 221 (FRIFCIVLAFCSIVGFTLSTQLLRQRFETDGK). At 222 to 259 (AKWDQESTLKELYIEKLSVPQEKRITLVEYLQQLSRHR) the chain is on the extracellular side. The chain crosses the membrane as a helical span at residues 260-287 (NFLWFVCMNLIQVFHCHFNSNFFPLFLE). At 288–300 (HLLSDKISVSTGS) the chain is on the cytoplasmic side. The helical transmembrane segment at 301-320 (FLLGISYIAPHLNNLYFLSL) threads the bilayer. Residues 321-325 (CRRWG) are Extracellular-facing. Residues 326-345 (VYAVVRGLFFLKLALSVVML) form a helical membrane-spanning segment. Topologically, residues 346 to 353 (LAGPDQVY) are cytoplasmic. A helical membrane pass occupies residues 354–388 (LLCIFIASNRVFTEGTCKLLNLVVTDLVDEDLVLN). The Extracellular portion of the chain corresponds to 389 to 397 (RRKQAASAL). A helical transmembrane segment spans residues 398-424 (LFGMVALVTKPGQTFAPLIGTWLLCVY). Topologically, residues 425–458 (TGYDIFQRNPLSNVVSAQPKLESDTILEPTLRQG) are cytoplasmic. A helical transmembrane segment spans residues 459 to 477 (CFYLLVFVPITCALLQLLS). Residues 478 to 509 (WTQFSLHGKRLQMVKAQRQGLMQGRAPEIKMI) are Extracellular-facing.

It localises to the cell membrane. This is Transmembrane protein 180 from Gallus gallus (Chicken).